We begin with the raw amino-acid sequence, 146 residues long: Hemoglobin subunit beta (146 aa).

Residues 2–146 enclose the Globin domain; sequence PFSAHEEKLI…VAAALSVEYY (145 aa). Residues His-63 and His-92 each contribute to the heme b site.

Belongs to the globin family. In terms of assembly, heterotetramer of two alpha chains and two beta chains. When oxygenated in vitro, exists virtually only in polymeric form. When deoxygenated, forms tetramers, octamers and larger polymers. As to expression, red blood cells.

Functionally, involved in oxygen transport from the lung to the various peripheral tissues. The sequence is that of Hemoglobin subunit beta from Paleosuchus palpebrosus (Cuvier's smooth-fronted caiman).